The primary structure comprises 149 residues: Myoglobin (149 aa).

A2 is modified (N-acetylalanine). The Globin domain maps to 2–143 (ADWDKVNSVW…ICSDIEKEYK (142 aa)). H89 lines the heme b pocket.

It belongs to the globin family. As to quaternary structure, monomeric.

It localises to the cytoplasm. It is found in the sarcoplasm. It catalyses the reaction Fe(III)-heme b-[protein] + nitric oxide + H2O = Fe(II)-heme b-[protein] + nitrite + 2 H(+). It carries out the reaction H2O2 + AH2 = A + 2 H2O. Monomeric heme protein which primary function is to store oxygen and facilitate its diffusion within muscle tissues. Reversibly binds oxygen through a pentacoordinated heme iron and enables its timely and efficient release as needed during periods of heightened demand. Depending on the oxidative conditions of tissues and cells, and in addition to its ability to bind oxygen, it also has a nitrite reductase activity whereby it regulates the production of bioactive nitric oxide. Under stress conditions, like hypoxia and anoxia, it also protects cells against reactive oxygen species thanks to its pseudoperoxidase activity. The polypeptide is Myoglobin (mb) (Galeorhinus galeus (Tope shark)).